The following is a 128-amino-acid chain: Nitrogen fixation nifHD region GlnB-like protein 2 (128 aa).

It belongs to the P(II) protein family.

In terms of biological role, could be involved in the regulation of nitrogen fixation. The chain is Nitrogen fixation nifHD region GlnB-like protein 2 (glnBB) from Methanothermococcus thermolithotrophicus (Methanococcus thermolithotrophicus).